The primary structure comprises 405 residues: Deoxyguanosinetriphosphate triphosphohydrolase-like protein (405 aa).

The region spanning 75–219 (RLTHTIEVAQ…AAIADDIAYN (145 aa)) is the HD domain.

This sequence belongs to the dGTPase family. Type 2 subfamily.

The protein is Deoxyguanosinetriphosphate triphosphohydrolase-like protein of Rhizobium meliloti (strain 1021) (Ensifer meliloti).